A 245-amino-acid polypeptide reads, in one-letter code: Uridylate kinase (245 aa).

An ATP-binding site is contributed by 14-17 (KLSG). Glycine 56 is a UMP binding site. ATP contacts are provided by glycine 57 and arginine 61. Residues aspartate 76 and 137–144 (TGLPFFTT) each bind UMP. Residues threonine 164, tyrosine 170, and aspartate 173 each contribute to the ATP site.

It belongs to the UMP kinase family. In terms of assembly, homohexamer.

It localises to the cytoplasm. The catalysed reaction is UMP + ATP = UDP + ADP. The protein operates within pyrimidine metabolism; CTP biosynthesis via de novo pathway; UDP from UMP (UMPK route): step 1/1. Inhibited by UTP. Catalyzes the reversible phosphorylation of UMP to UDP. This Syntrophobacter fumaroxidans (strain DSM 10017 / MPOB) protein is Uridylate kinase.